A 215-amino-acid chain; its full sequence is Myelin protein zero-like protein 2 (215 aa).

An N-terminal signal peptide occupies residues 1–26; the sequence is MYGKSPALVLPLLLSLQLTALCPTEA. Residues 27–141 enclose the Ig-like V-type domain; it reads VEIYTSGALE…DGLVGTIRLS (115 aa). Residues 27-154 are Extracellular-facing; it reads VEIYTSGALE…TVPFSEIYFL (128 aa). Residues Asn39 and Asn118 are each glycosylated (N-linked (GlcNAc...) asparagine). Cys47 and Cys123 are disulfide-bonded. A helical transmembrane segment spans residues 155–175; it reads AVAIGSACALMIIVVIVVVLF. Residues 176-215 are Cytoplasmic-facing; that stretch reads QHFRKKRWADRADKAEGTKSKEEEKLNQGNKVSVFVEDTD. The span at 187–201 shows a compositional bias: basic and acidic residues; it reads ADKAEGTKSKEEEKL. Residues 187–215 form a disordered region; the sequence is ADKAEGTKSKEEEKLNQGNKVSVFVEDTD.

It belongs to the myelin P0 protein family. As to expression, widely expressed. Expressed in the cochlea, in Deiters' cells, possibly at contact sites with the basilar membrane. Expressed in both outer and inner auditory hair cells. In the stria vascularis, detected in the basal cell layer. Not detected in thymocytes, lymphocytes, macrophage or dendritic cells.

The protein resides in the membrane. Its function is as follows. Mediates homophilic cell-cell adhesion. This Mus musculus (Mouse) protein is Myelin protein zero-like protein 2 (Mpzl2).